Here is a 267-residue protein sequence, read N- to C-terminus: MAKSLVLSSLLLALLLAAPLASLADNNVLLTGDVLHTDNQLSFESAAFVMQGDCNLVLYNEAGGFQSNTHGRGVGCTLRLNNFGQLEIHSANSNTPVWVSLRNGIPVRGDYAAVLGPDQHVTIYGPAIWSTPAPNRHERGATVSNIPRVRNVLFSSQVMSDNAQLATRDYSLVMRDDCNLALTKGSKTNIVWESGTSGRGQHCFMRLGHTGLIEISDDRLNTVWRSNTVGQEGDYVLILQINGQAVVYGPAVWSTASPARGGASAAL.

The first 24 residues, 1-24 (MAKSLVLSSLLLALLLAAPLASLA), serve as a signal peptide directing secretion. Bulb-type lectin domains follow at residues 26–136 (NNVL…APNR) and 150–260 (RNVL…SPAR). 2 disulfides stabilise this stretch: Cys54-Cys76 and Cys178-Cys203.

Heterotetramer of 2 domain 1 and 2 domain 2 chains arranged as a dimer of domain 1/domain 2 heterodimers.

Functionally, mannose-specific lectin. Has weak agglutinating activity towards trypsin-treated erythrocytes from rabbit but not from human. This chain is Mannose-specific lectin 1, found in Crocus vernus (Dutch crocus).